Here is a 200-residue protein sequence, read N- to C-terminus: MTVHIKVYSDYVCPFCFVGKAAFEEAIKGKDVEVEWMPFELRPSPSPQLDPVNDPSKQYMWQTSIQPMAEKLGVEINFPNVSPHPYTDLAFEGFHFAKEYNKGHEYNTRVFQAFFQEDQNIGDIDILTKLAEEVGLDGASFKSALETRTYQDVQRQALKHAYEEADITAVPTFIIGDTVIPGAAGKDVFEKAISDEQKKK.

This is an uncharacterized protein from Bacillus subtilis (strain 168).